We begin with the raw amino-acid sequence, 442 residues long: Trigger factor (442 aa).

Residues 165-250 (DDTAQIDFEG…LHKILQKELP (86 aa)) enclose the PPIase FKBP-type domain.

Belongs to the FKBP-type PPIase family. Tig subfamily.

It localises to the cytoplasm. It catalyses the reaction [protein]-peptidylproline (omega=180) = [protein]-peptidylproline (omega=0). Its function is as follows. Involved in protein export. Acts as a chaperone by maintaining the newly synthesized protein in an open conformation. Functions as a peptidyl-prolyl cis-trans isomerase. This chain is Trigger factor, found in Helicobacter hepaticus (strain ATCC 51449 / 3B1).